The sequence spans 987 residues: Mitotic checkpoint serine/threonine-protein kinase bub-1 (987 aa).

Disordered stretches follow at residues 278 to 385 (RRRH…TSKS) and 574 to 599 (LAANQAVQPSVTESSKPERSDPKDSS). Positions 350 to 364 (ERLKIMTAGRKDGNP) are enriched in basic and acidic residues. Positions 368–380 (STSISSNYSTASA) are enriched in low complexity. The span at 575–587 (AANQAVQPSVTES) shows a compositional bias: polar residues. Positions 588–599 (SKPERSDPKDSS) are enriched in basic and acidic residues. Positions 690–987 (LHIQTLIGQG…EACDLAANQK (298 aa)) constitute a Protein kinase domain. ATP is bound by residues 696 to 704 (IGQGGYAKV) and Lys718. Residue Asp814 is the Proton acceptor of the active site.

It belongs to the protein kinase superfamily. Ser/Thr protein kinase family. BUB1 subfamily. As to quaternary structure, interacts (via kinase domain) with mdf-1 (via coiled coil domain); the interaction recruits mdf-1 to unattached kinetochores during mitosis and between homologous chromosomes in early anaphase of meiosis I. May interact with bub-3; for localization at the kinetochore and the onset of anaphase.

The protein localises to the cytoplasm. The protein resides in the cell cortex. Its subcellular location is the nucleus. It is found in the chromosome. It localises to the centromere. The protein localises to the kinetochore. The catalysed reaction is L-seryl-[protein] + ATP = O-phospho-L-seryl-[protein] + ADP + H(+). It carries out the reaction L-threonyl-[protein] + ATP = O-phospho-L-threonyl-[protein] + ADP + H(+). Its function is as follows. Serine/threonine-protein kinase essential for spindle-assembly checkpoint signaling. Plays a key role in the recruitment of the checkpoint proteins bub-3, mdf-1 and mdf-2 to unattached kinetochores. mdf-1 recruitment is independent of bub-1 kinase activity. Has a role in the correct kinetochore localization of the spindly-like protein spdl-1. In addition, during meiotic anaphase I, controls the recruitment of hcp-1/2 and klp-19 to the ring-shaped domain formed between chromosomes. Involved in chromosome alignment, chromosome homolog segregation and spindle assembly. In association with bub-3 at the kinetochore region of chromosomes, promotes the onset on anaphase independently from spindle checkpoint signaling and promotes the formation of stable end-on bipolar attachments of chromosomes. Plays a role in nuclear envelope breakdown. Required maternally during embryogenesis and in the zygote for the postembryonic development of several tissues including ventral cord neurons, gonad, intestine and seam cells. The polypeptide is Mitotic checkpoint serine/threonine-protein kinase bub-1 (Caenorhabditis elegans).